The chain runs to 343 residues: Phosphoribosylformylglycinamidine cyclo-ligase (343 aa).

This sequence belongs to the AIR synthase family.

The protein resides in the cytoplasm. The catalysed reaction is 2-formamido-N(1)-(5-O-phospho-beta-D-ribosyl)acetamidine + ATP = 5-amino-1-(5-phospho-beta-D-ribosyl)imidazole + ADP + phosphate + H(+). Its pathway is purine metabolism; IMP biosynthesis via de novo pathway; 5-amino-1-(5-phospho-D-ribosyl)imidazole from N(2)-formyl-N(1)-(5-phospho-D-ribosyl)glycinamide: step 2/2. This is Phosphoribosylformylglycinamidine cyclo-ligase from Staphylococcus epidermidis (strain ATCC 35984 / DSM 28319 / BCRC 17069 / CCUG 31568 / BM 3577 / RP62A).